The sequence spans 316 residues: Pantothenate kinase (316 aa).

95–102 (GSVAVGKS) provides a ligand contact to ATP.

The protein belongs to the prokaryotic pantothenate kinase family.

It localises to the cytoplasm. It carries out the reaction (R)-pantothenate + ATP = (R)-4'-phosphopantothenate + ADP + H(+). It participates in cofactor biosynthesis; coenzyme A biosynthesis; CoA from (R)-pantothenate: step 1/5. The protein is Pantothenate kinase of Yersinia pseudotuberculosis serotype O:3 (strain YPIII).